A 163-amino-acid polypeptide reads, in one-letter code: Ribosome maturation factor RimP (163 aa).

It belongs to the RimP family.

The protein localises to the cytoplasm. Functionally, required for maturation of 30S ribosomal subunits. In Streptococcus mutans serotype c (strain ATCC 700610 / UA159), this protein is Ribosome maturation factor RimP.